The chain runs to 200 residues: NADH-quinone oxidoreductase subunit C (200 aa).

It belongs to the complex I 30 kDa subunit family. In terms of assembly, NDH-1 is composed of 14 different subunits. Subunits NuoB, C, D, E, F, and G constitute the peripheral sector of the complex.

Its subcellular location is the cell inner membrane. It carries out the reaction a quinone + NADH + 5 H(+)(in) = a quinol + NAD(+) + 4 H(+)(out). In terms of biological role, NDH-1 shuttles electrons from NADH, via FMN and iron-sulfur (Fe-S) centers, to quinones in the respiratory chain. The immediate electron acceptor for the enzyme in this species is believed to be ubiquinone. Couples the redox reaction to proton translocation (for every two electrons transferred, four hydrogen ions are translocated across the cytoplasmic membrane), and thus conserves the redox energy in a proton gradient. This chain is NADH-quinone oxidoreductase subunit C, found in Rhizobium rhizogenes (strain K84 / ATCC BAA-868) (Agrobacterium radiobacter).